The following is a 492-amino-acid chain: Linolenate hydroperoxide lyase, chloroplastic (492 aa).

Residues 1-33 (MLLRTMAATSPRPPPSTSLTSQQPPSPPSQLPL) form a disordered region. Residues 1 to 34 (MLLRTMAATSPRPPPSTSLTSQQPPSPPSQLPLR) constitute a chloroplast transit peptide. Cysteine 454 contacts heme.

Belongs to the cytochrome P450 family. Requires heme as cofactor. As to expression, expressed in roots, leaves, flowers and siliques.

Its subcellular location is the plastid. It localises to the chloroplast. Functionally, catalyzes the conversion of (9Z,11E,15Z)-(13S)-hydroperoxyoctadeca-9,11,15-trienoate to (9Z)-12-oxo-dodec-9-enoate and cis-3-hexenal. Possesses low activity toward (9Z,11E)-(13S)-13-hydroperoxyoctadeca-9,11-dienoate. Required for the synthesis of the green leaf volatiles (GLVs) hexanal and trans-2-hexenal. This Arabidopsis thaliana (Mouse-ear cress) protein is Linolenate hydroperoxide lyase, chloroplastic.